A 233-amino-acid chain; its full sequence is DNA repair protein RecO (233 aa).

It belongs to the RecO family.

In terms of biological role, involved in DNA repair and RecF pathway recombination. In Pseudomonas aeruginosa (strain UCBPP-PA14), this protein is DNA repair protein RecO.